The chain runs to 316 residues: Pantothenate kinase (316 aa).

Residue 96-103 (GSVAVGKS) coordinates ATP.

This sequence belongs to the prokaryotic pantothenate kinase family.

Its subcellular location is the cytoplasm. It catalyses the reaction (R)-pantothenate + ATP = (R)-4'-phosphopantothenate + ADP + H(+). The protein operates within cofactor biosynthesis; coenzyme A biosynthesis; CoA from (R)-pantothenate: step 1/5. In Shouchella clausii (strain KSM-K16) (Alkalihalobacillus clausii), this protein is Pantothenate kinase.